Reading from the N-terminus, the 175-residue chain is Large ribosomal subunit protein uL10 (175 aa).

The protein belongs to the universal ribosomal protein uL10 family. As to quaternary structure, part of the ribosomal stalk of the 50S ribosomal subunit. The N-terminus interacts with L11 and the large rRNA to form the base of the stalk. The C-terminus forms an elongated spine to which L12 dimers bind in a sequential fashion forming a multimeric L10(L12)X complex.

Functionally, forms part of the ribosomal stalk, playing a central role in the interaction of the ribosome with GTP-bound translation factors. This chain is Large ribosomal subunit protein uL10, found in Xylella fastidiosa (strain M23).